A 151-amino-acid chain; its full sequence is Transcriptional repressor NrdR (151 aa).

A zinc finger lies at 3 to 34; sequence CPKCGSLNDKVLETRQSKEGVVIKRRRECLNC. An ATP-cone domain is found at 49–139; that stretch reads IEVIKKNNTV…VFDGFEDIKD (91 aa).

Belongs to the NrdR family. It depends on Zn(2+) as a cofactor.

Its function is as follows. Negatively regulates transcription of bacterial ribonucleotide reductase nrd genes and operons by binding to NrdR-boxes. This chain is Transcriptional repressor NrdR, found in Sulfurihydrogenibium sp. (strain YO3AOP1).